A 364-amino-acid chain; its full sequence is MRVMRVMRPRTLLLLLSGVLVLTETLAGSHSLRYFYTGVSRPGLGEPRFIAVGYVDDTQFVRFDSDAPNPREEPRVPWMEQEGPEYWDRNTRIYKDTAQIFRVDLNTLRGYYNQSETGSHNIQAMYGCDVGPDGRLLRGFWQFGYDGRDYIALNEELRSWTAADTAAQITKRKWEAAGAAETWRNYLEGECVEWLRRYLENGKDTLLRADPPKAHVTHHSISDREVTLRCWALGFYPEEISLTWQREGEDQTQDMELVETRPSGDGTFQKWAALVVPSGEEQRYTCRVQHEGLQEPLTLRWEPPQTSFLIMGIIVGLVLLVVALVAGAVIWRKKRSGEKGRIYTQAASSDSAQGSDVSLTVPKV.

A signal peptide spans 1–27; it reads MRVMRVMRPRTLLLLLSGVLVLTETLA. Residues 28–117 form an alpha-1 region; it reads GSHSLRYFYT…LRGYYNQSET (90 aa). Residues 28 to 310 are Extracellular-facing; the sequence is GSHSLRYFYT…WEPPQTSFLI (283 aa). An N-linked (GlcNAc...) asparagine glycan is attached at N113. The segment at 118–209 is alpha-2; it reads GSHNIQAMYG…ENGKDTLLRA (92 aa). Disulfide bonds link C128-C191 and C230-C286. The alpha-3 stretch occupies residues 210–301; the sequence is DPPKAHVTHH…GLQEPLTLRW (92 aa). Residues 212–298 form the Ig-like C1-type domain; the sequence is PKAHVTHHSI…QHEGLQEPLT (87 aa). Residues 302-310 are connecting peptide; it reads EPPQTSFLI. Residues 311 to 331 form a helical membrane-spanning segment; sequence MGIIVGLVLLVVALVAGAVIW. The Cytoplasmic segment spans residues 332 to 364; it reads RKKRSGEKGRIYTQAASSDSAQGSDVSLTVPKV. A phosphoserine mark is found at S355 and S358.

This sequence belongs to the MHC class I family. Heterodimer of an alpha chain and a beta chain (beta-2-microglobulin).

Its subcellular location is the membrane. Functionally, involved in the presentation of foreign antigens to the immune system. The chain is BOLA class I histocompatibility antigen, alpha chain BL3-7 from Bos taurus (Bovine).